The chain runs to 621 residues: Very-long-chain aldehyde decarbonylase GL1-5 (621 aa).

A run of 5 helical transmembrane segments spans residues 99–119 (IILS…GQHL), 126–146 (GAGL…YWFH), 186–206 (LLFS…IIAF), 224–244 (FELV…LMYT), and 332–352 (MWPL…SFTV). The Fatty acid hydroxylase domain occupies 138 to 272 (VEFLYYWFHR…MPFYDYIYNT (135 aa)).

It belongs to the sterol desaturase family. As to quaternary structure, homodimer.

The protein localises to the endoplasmic reticulum membrane. The catalysed reaction is a long-chain fatty aldehyde + 2 NADPH + O2 + H(+) = a long-chain alkane + formate + 2 NADP(+) + H2O. Functionally, aldehyde decarbonylase involved in the conversion of aldehydes to alkanes. Core component of a very-long-chain alkane synthesis complex. This is Very-long-chain aldehyde decarbonylase GL1-5 from Oryza sativa subsp. indica (Rice).